A 180-amino-acid chain; its full sequence is MQNPQNLIWIDLEMTGLDPDSDVIIEMATIVTDSELNTLAEGPVIAIHHSDEVLARMDEWNTRTHGNSGLTQRVRESKVSMAEAEAQTIAFLEQWVPKGKSPICGNSICQDRRFLYRHMRGLENYFHYRNLDVSTLKELAARWAPDVRDSFKKGSTHLALDDIRESIAELRHYREHFIKF.

The Exonuclease domain maps to 7-170 (LIWIDLEMTG…DDIRESIAEL (164 aa)). Tyrosine 128 is a catalytic residue.

Belongs to the oligoribonuclease family.

Its subcellular location is the cytoplasm. In terms of biological role, 3'-to-5' exoribonuclease specific for small oligoribonucleotides. This is Oligoribonuclease from Pseudomonas entomophila (strain L48).